We begin with the raw amino-acid sequence, 144 residues long: Peptide methionine sulfoxide reductase B7 (144 aa).

The MsrB domain maps to 19-140 (DEEWRAVLSP…NSVSLKFSSA (122 aa)). 4 residues coordinate Zn(2+): Cys58, Cys61, Cys104, and Cys107. Cys76 and Cys129 are oxidised to a cystine. The active-site Nucleophile is Cys129.

Belongs to the MsrB Met sulfoxide reductase family. The cofactor is Zn(2+).

The protein resides in the cytoplasm. Its subcellular location is the cytosol. It carries out the reaction L-methionyl-[protein] + [thioredoxin]-disulfide + H2O = L-methionyl-(R)-S-oxide-[protein] + [thioredoxin]-dithiol. In terms of biological role, catalyzes the reduction of methionine sulfoxide (MetSO) to methionine in proteins. Plays a protective role against oxidative stress by restoring activity to proteins that have been inactivated by methionine oxidation. MSRB family specifically reduces the MetSO R-enantiomer. The polypeptide is Peptide methionine sulfoxide reductase B7 (MSRB7) (Arabidopsis thaliana (Mouse-ear cress)).